The primary structure comprises 315 residues: Aspartate carbamoyltransferase catalytic subunit (315 aa).

R61 and T62 together coordinate carbamoyl phosphate. K90 provides a ligand contact to L-aspartate. Residues R111, H139, and Q142 each coordinate carbamoyl phosphate. The L-aspartate site is built by R172 and R234. 2 residues coordinate carbamoyl phosphate: L274 and P275.

This sequence belongs to the aspartate/ornithine carbamoyltransferase superfamily. ATCase family. Heterooligomer of catalytic and regulatory chains.

It carries out the reaction carbamoyl phosphate + L-aspartate = N-carbamoyl-L-aspartate + phosphate + H(+). It participates in pyrimidine metabolism; UMP biosynthesis via de novo pathway; (S)-dihydroorotate from bicarbonate: step 2/3. Catalyzes the condensation of carbamoyl phosphate and aspartate to form carbamoyl aspartate and inorganic phosphate, the committed step in the de novo pyrimidine nucleotide biosynthesis pathway. The chain is Aspartate carbamoyltransferase catalytic subunit from Hyperthermus butylicus (strain DSM 5456 / JCM 9403 / PLM1-5).